A 184-amino-acid chain; its full sequence is ATP synthase subunit delta (184 aa).

This sequence belongs to the ATPase delta chain family. F-type ATPases have 2 components, F(1) - the catalytic core - and F(0) - the membrane proton channel. F(1) has five subunits: alpha(3), beta(3), gamma(1), delta(1), epsilon(1). F(0) has three main subunits: a(1), b(2) and c(10-14). The alpha and beta chains form an alternating ring which encloses part of the gamma chain. F(1) is attached to F(0) by a central stalk formed by the gamma and epsilon chains, while a peripheral stalk is formed by the delta and b chains.

The protein resides in the cell inner membrane. F(1)F(0) ATP synthase produces ATP from ADP in the presence of a proton or sodium gradient. F-type ATPases consist of two structural domains, F(1) containing the extramembraneous catalytic core and F(0) containing the membrane proton channel, linked together by a central stalk and a peripheral stalk. During catalysis, ATP synthesis in the catalytic domain of F(1) is coupled via a rotary mechanism of the central stalk subunits to proton translocation. Its function is as follows. This protein is part of the stalk that links CF(0) to CF(1). It either transmits conformational changes from CF(0) to CF(1) or is implicated in proton conduction. This chain is ATP synthase subunit delta, found in Paramagnetospirillum magneticum (strain ATCC 700264 / AMB-1) (Magnetospirillum magneticum).